Here is a 275-residue protein sequence, read N- to C-terminus: Elongation factor Ts (275 aa).

Residues 76 to 79 (TDFV) form an involved in Mg(2+) ion dislocation from EF-Tu region.

The protein belongs to the EF-Ts family.

It localises to the cytoplasm. Its function is as follows. Associates with the EF-Tu.GDP complex and induces the exchange of GDP to GTP. It remains bound to the aminoacyl-tRNA.EF-Tu.GTP complex up to the GTP hydrolysis stage on the ribosome. The sequence is that of Elongation factor Ts from Nocardia farcinica (strain IFM 10152).